The primary structure comprises 47 residues: Putative beta-neurotoxin (47 aa).

The LCN-type CS-alpha/beta domain maps to 1–47; the sequence is KEGYMGSDGCKMSCVINDQFCDTECQAKLKGSTGYCYFXGLACYXXG. Cystine bridges form between cysteine 14/cysteine 36 and cysteine 21/cysteine 43.

In terms of tissue distribution, expressed by the venom gland.

The protein localises to the secreted. Causes transient paralysis of the rear legs of and spasms in insects (A.domestica). This is Putative beta-neurotoxin from Rhopalurus junceus (Caribbean blue scorpion).